The following is a 253-amino-acid chain: Large ribosomal subunit protein uL10m (253 aa).

A mitochondrion-targeting transit peptide spans 1–24; sequence MANLMQRSLPLTTTRTPVLQFLRF.

This sequence belongs to the universal ribosomal protein uL10 family. In terms of assembly, component of the mitochondrial ribosome large subunit (39S) which comprises a 16S rRNA and about 50 distinct proteins.

It is found in the mitochondrion. The chain is Large ribosomal subunit protein uL10m (mRpL10) from Drosophila pseudoobscura pseudoobscura (Fruit fly).